The chain runs to 334 residues: Type II methyltransferase M.NlaIII (334 aa).

Belongs to the N(4)/N(6)-methyltransferase family.

It carries out the reaction a 2'-deoxyadenosine in DNA + S-adenosyl-L-methionine = an N(6)-methyl-2'-deoxyadenosine in DNA + S-adenosyl-L-homocysteine + H(+). In terms of biological role, a methylase, recognizes the double-stranded sequence 5'-CATG-3', methylates A-2 on both strands and protects the DNA from cleavage by the NlaIII endonuclease. This is Type II methyltransferase M.NlaIII (nlaIIIM) from Neisseria lactamica.